A 23-amino-acid chain; its full sequence is Acidic phospholipase A2 Cvv-E6c (23 aa).

Ca(2+) is required as a cofactor. In terms of processing, contains 7 disulfide bonds. In terms of tissue distribution, expressed by the venom gland.

The protein localises to the secreted. The enzyme catalyses a 1,2-diacyl-sn-glycero-3-phosphocholine + H2O = a 1-acyl-sn-glycero-3-phosphocholine + a fatty acid + H(+). Functionally, snake venom phospholipase A2 (PLA2) that significantly inhibits ADP-induced platelet aggregation in platelet-rich plasma of human, rabbit and guinea pig. PLA2 catalyzes the calcium-dependent hydrolysis of the 2-acyl groups in 3-sn-phosphoglycerides. This chain is Acidic phospholipase A2 Cvv-E6c, found in Crotalus viridis viridis (Prairie rattlesnake).